The chain runs to 215 residues: Glycerol-3-phosphate acyltransferase (215 aa).

The next 6 helical transmembrane spans lie at 3 to 23, 42 to 61, 68 to 90, 110 to 130, 134 to 154, and 162 to 182; these read LILLILTAYLLGSIPTGLWIG, TNTFRILGLKAGAATLLIDI, TLLPVLVGASNISPITIGFFAVL, AGVLLGFAPLYLLFLAAVFVL, LFSMISLASLTASVVAVISVL, and LLPSYDWLLTITIVVLAAIII.

This sequence belongs to the PlsY family. As to quaternary structure, probably interacts with PlsX.

The protein resides in the cell membrane. The catalysed reaction is an acyl phosphate + sn-glycerol 3-phosphate = a 1-acyl-sn-glycero-3-phosphate + phosphate. It participates in lipid metabolism; phospholipid metabolism. Functionally, catalyzes the transfer of an acyl group from acyl-phosphate (acyl-PO(4)) to glycerol-3-phosphate (G3P) to form lysophosphatidic acid (LPA). This enzyme utilizes acyl-phosphate as fatty acyl donor, but not acyl-CoA or acyl-ACP. The sequence is that of Glycerol-3-phosphate acyltransferase from Streptococcus equi subsp. equi (strain 4047).